The sequence spans 98 residues: NADH-ubiquinone oxidoreductase chain 4L (98 aa).

3 consecutive transmembrane segments (helical) span residues 1–21 (MSLVYMNIMTAFAVSLTGLLM), 29–49 (SLLCLEGMMLSLFVMATLMIL), and 61–81 (IILLVFAACEAALGLSLLVMV).

It belongs to the complex I subunit 4L family. As to quaternary structure, core subunit of respiratory chain NADH dehydrogenase (Complex I) which is composed of 45 different subunits.

The protein localises to the mitochondrion inner membrane. The catalysed reaction is a ubiquinone + NADH + 5 H(+)(in) = a ubiquinol + NAD(+) + 4 H(+)(out). Core subunit of the mitochondrial membrane respiratory chain NADH dehydrogenase (Complex I) which catalyzes electron transfer from NADH through the respiratory chain, using ubiquinone as an electron acceptor. Part of the enzyme membrane arm which is embedded in the lipid bilayer and involved in proton translocation. This chain is NADH-ubiquinone oxidoreductase chain 4L (MT-ND4L), found in Pantholops hodgsonii (Chiru).